Reading from the N-terminus, the 535-residue chain is Glucose-6-phosphate isomerase (535 aa).

Catalysis depends on E359, which acts as the Proton donor. Active-site residues include H390 and K505.

Belongs to the GPI family.

Its subcellular location is the cytoplasm. The catalysed reaction is alpha-D-glucose 6-phosphate = beta-D-fructose 6-phosphate. It functions in the pathway carbohydrate biosynthesis; gluconeogenesis. The protein operates within carbohydrate degradation; glycolysis; D-glyceraldehyde 3-phosphate and glycerone phosphate from D-glucose: step 2/4. Functionally, catalyzes the reversible isomerization of glucose-6-phosphate to fructose-6-phosphate. In Treponema pallidum (strain Nichols), this protein is Glucose-6-phosphate isomerase.